Here is a 397-residue protein sequence, read N- to C-terminus: MTVSPVVATDAPSTDATRTTATSATSPAVATDAGGVSISAFDGSRVRVVLMLDVHDGMQQEFLDAYERIRDRVAAVPGHVSDQLCQSLENPTQWLLTSEWESAAPFLAWVNSDEHLDTVEPLATCVRDTHSLRYSVLRETDGGRPAPGEPRSAPRIGDNVVRHALTFTVRPGTEAETARLLSEYVSPDAHVDGSTRLLRTSLFMSGNRIVRAVEVRGDLQTALRHVARQPGVRAVEEALNPYLEQDRDLGDPQSARRFFTRAAMPAVHHATYPDRSGARRERLALLYPVRDGAGPDLARLLARQDAAAARNPDGPVLAATVFHRDDLVVRLVDVDGDPEDAPAEVLGLHGRGAADAERLLDAAAVGVDGSPAEAATLSRLLRRIRMTPLTDRRSAGS.

The disordered stretch occupies residues 1–22 (MTVSPVVATDAPSTDATRTTAT). The span at 8-22 (ATDAPSTDATRTTAT) shows a compositional bias: low complexity. The 92-residue stretch at 46–137 (VRVVLMLDVH…DTHSLRYSVL (92 aa)) folds into the ABM domain.

This sequence belongs to the SchA/CurD family.

The sequence is that of 42.8 kDa protein in whiE locus from Streptomyces coelicolor (strain ATCC BAA-471 / A3(2) / M145).